A 290-amino-acid polypeptide reads, in one-letter code: Phosphatidylserine decarboxylase proenzyme (290 aa).

Catalysis depends on charge relay system; for autoendoproteolytic cleavage activity residues Asp-96, His-153, and Ser-257. Ser-257 acts as the Schiff-base intermediate with substrate; via pyruvic acid; for decarboxylase activity in catalysis. At Ser-257 the chain carries Pyruvic acid (Ser); by autocatalysis.

This sequence belongs to the phosphatidylserine decarboxylase family. PSD-B subfamily. Prokaryotic type I sub-subfamily. As to quaternary structure, heterodimer of a large membrane-associated beta subunit and a small pyruvoyl-containing alpha subunit. Pyruvate is required as a cofactor. Is synthesized initially as an inactive proenzyme. Formation of the active enzyme involves a self-maturation process in which the active site pyruvoyl group is generated from an internal serine residue via an autocatalytic post-translational modification. Two non-identical subunits are generated from the proenzyme in this reaction, and the pyruvate is formed at the N-terminus of the alpha chain, which is derived from the carboxyl end of the proenzyme. The autoendoproteolytic cleavage occurs by a canonical serine protease mechanism, in which the side chain hydroxyl group of the serine supplies its oxygen atom to form the C-terminus of the beta chain, while the remainder of the serine residue undergoes an oxidative deamination to produce ammonia and the pyruvoyl prosthetic group on the alpha chain. During this reaction, the Ser that is part of the protease active site of the proenzyme becomes the pyruvoyl prosthetic group, which constitutes an essential element of the active site of the mature decarboxylase.

It is found in the cell membrane. The catalysed reaction is a 1,2-diacyl-sn-glycero-3-phospho-L-serine + H(+) = a 1,2-diacyl-sn-glycero-3-phosphoethanolamine + CO2. It participates in phospholipid metabolism; phosphatidylethanolamine biosynthesis; phosphatidylethanolamine from CDP-diacylglycerol: step 2/2. Its function is as follows. Catalyzes the formation of phosphatidylethanolamine (PtdEtn) from phosphatidylserine (PtdSer). The protein is Phosphatidylserine decarboxylase proenzyme of Haemophilus influenzae (strain ATCC 51907 / DSM 11121 / KW20 / Rd).